The primary structure comprises 521 residues: Glutamate--tRNA ligase (521 aa).

Residues 13 to 23 (PSPSGFLHVGG) carry the 'HIGH' region motif. A 'KMSKS' region motif is present at residues 253-257 (KLSKR). Residue Lys-256 coordinates ATP.

Belongs to the class-I aminoacyl-tRNA synthetase family. Glutamate--tRNA ligase type 1 subfamily. Monomer.

It is found in the cytoplasm. It catalyses the reaction tRNA(Glu) + L-glutamate + ATP = L-glutamyl-tRNA(Glu) + AMP + diphosphate. Functionally, catalyzes the attachment of glutamate to tRNA(Glu) in a two-step reaction: glutamate is first activated by ATP to form Glu-AMP and then transferred to the acceptor end of tRNA(Glu). This is Glutamate--tRNA ligase from Leptospira interrogans serogroup Icterohaemorrhagiae serovar copenhageni (strain Fiocruz L1-130).